The sequence spans 450 residues: Phosphoglucosamine mutase (450 aa).

The Phosphoserine intermediate role is filled by Ser-101. Residues Ser-101, Asp-242, Asp-244, and Asp-246 each contribute to the Mg(2+) site. A Phosphoserine modification is found at Ser-101.

This sequence belongs to the phosphohexose mutase family. Requires Mg(2+) as cofactor. Post-translationally, activated by phosphorylation.

It carries out the reaction alpha-D-glucosamine 1-phosphate = D-glucosamine 6-phosphate. In terms of biological role, catalyzes the conversion of glucosamine-6-phosphate to glucosamine-1-phosphate. The sequence is that of Phosphoglucosamine mutase from Rhodopseudomonas palustris (strain BisA53).